Consider the following 382-residue polypeptide: MSLNIFWFLPTHGDGKYLGTSEGARAVDHGYLQQIAQAADRLGFGGVLIPTGRSCEDSWLVAASLIPVTQRLKFLVALRPGIISPTVAARQAATLDRLSNGRALFNLVTGGDPDELAGDGLHLNHQERYEASVEFTRIWRKVLEGENVDYDGKHIQVKGAKLLYPPIQQPRPPLYFGGSSEAAQDLAAEQVELYLTWGEPPAAVAEKIAQVREKAAAQGREVRFGIRLHVIVRETNEEAWAAAERLISHLDDDTISRAQASLARFDSVGQQRMAALHGGNRDNLEVSPNLWAGVGLVRGGAGTALVGDGPTVAARVKEYADLGIDTFIFSGYPHLEESYRVAELLFPHLDVQRPEQPKAGGYVSPFGEMVANDILPKSVSQS.

It belongs to the SsuD family.

It catalyses the reaction an alkanesulfonate + FMNH2 + O2 = an aldehyde + FMN + sulfite + H2O + 2 H(+). Catalyzes the desulfonation of aliphatic sulfonates. In Pseudomonas putida (strain ATCC 47054 / DSM 6125 / CFBP 8728 / NCIMB 11950 / KT2440), this protein is Alkanesulfonate monooxygenase.